The chain runs to 405 residues: MTAAVTSSNIVLETHESGIKPYFEQKIQETELKIRSKTENVRRLEAQRNALNDKVRFIKDELRLLQEPGSYVGEVIKIVSDKKVLVKVQPEGKYIVDVAKDINVKDLKASQRVCLRSDSYMLHKVLENKADPLVSLMMVEKVPDSTYDMVGGLTKQIKEIKEVIELPVKHPELFESLGIAQPKGVILYGPPGTGKTLLARAVAHHTDCKFIRVSGAELVQKYIGEGSRMVRELFVMAREHAPSIIFMDEIDSIGSTRVEGSGGGDSEVQRTMLELLNQLDGFETSKNIKIIMATNRLDILDPALLRPGRIDRKIEFPPPSVAARAEILRIHSRKMNLTRGINLRKVAEKMNGCSGADVKGVCTEAGMYALRERRIHVTQEDFELAVGKVMNKNQETAISVAKLFK.

Threonine 2 carries the N-acetylthreonine modification. 189–196 (GPPGTGKT) provides a ligand contact to ATP.

This sequence belongs to the AAA ATPase family. In terms of assembly, may form a homodimer or a heterodimer with a related family member. Interacts with OLA1, TMA17, and UBR1. In terms of processing, N-acetylated by NAT1.

The protein localises to the cytoplasm. Its subcellular location is the nucleus. Its function is as follows. The 26S proteasome is involved in the ATP-dependent degradation of ubiquitinated proteins. The regulatory (or ATPase) complex confers ATP dependency and substrate specificity to the 26S complex. This Saccharomyces cerevisiae (strain ATCC 204508 / S288c) (Baker's yeast) protein is 26S proteasome regulatory subunit 8 homolog (RPT6).